A 439-amino-acid chain; its full sequence is MIAKHMIRTLMIETPSVPGNLGRVATAIGLLGGDIGEVETVKVGPNYTMRNITVQVENEEQLQEVIAAVQALGEGIRLHTVSDEVLSAHEGGKIQMKSKMPIRSLAELGRVYTPGVADVCRLIEKEPEKASIYTTISNSVAIVTDGTAILGLGNIGSVAGMPVMEGKAALFDQLAGISGIPILLDTSDPEEIIKTVKHISPGFSGILLEDIGSPHCFEIEDRLKEELNIPVMHDDQHGTAVVTLAAAISACRSAGVDLKEAKVGQIGLGAAGVAICRMFMAYGVNAVYGTDKSESAMNRLEQYGGQAVSSIEELMETCDIVIATTGVPGLIKPAFVRSGQVILALSNPKPEIEPEAALQAGAAYAADGRSVNNVLGFPGIFRGALNAKSTEINHDMLVAAAEAIAACTKQGDVVPQPLDSKVHHAVAAAVEHAALTAVK.

The ACT domain maps to 9–84; sequence TLMIETPSVP…GIRLHTVSDE (76 aa). Residue Y112 is the Proton donor of the active site. The active-site Proton acceptor is the K167. 3 residues coordinate a divalent metal cation: E209, D210, and D235. NAD(+) is bound by residues 268 to 271, N347, and N373; that span reads LGAA.

This sequence belongs to the malic enzymes family. Mg(2+) is required as a cofactor. It depends on Mn(2+) as a cofactor.

It carries out the reaction (S)-malate + NAD(+) = pyruvate + CO2 + NADH. It catalyses the reaction oxaloacetate + H(+) = pyruvate + CO2. Functionally, catalyzes the decarboxylation of malate to pyruvate. Is specific for NAD, cannot use NADP. Can also catalyze the decarboxylation of oxaloacetate. Involved in keeping the ATP levels high. This chain is NAD-dependent malic enzyme 1, found in Bacillus subtilis (strain 168).